Reading from the N-terminus, the 214-residue chain is ATP phosphoribosyltransferase (214 aa).

It belongs to the ATP phosphoribosyltransferase family. Short subfamily. In terms of assembly, heteromultimer composed of HisG and HisZ subunits.

The protein localises to the cytoplasm. The enzyme catalyses 1-(5-phospho-beta-D-ribosyl)-ATP + diphosphate = 5-phospho-alpha-D-ribose 1-diphosphate + ATP. It functions in the pathway amino-acid biosynthesis; L-histidine biosynthesis; L-histidine from 5-phospho-alpha-D-ribose 1-diphosphate: step 1/9. Functionally, catalyzes the condensation of ATP and 5-phosphoribose 1-diphosphate to form N'-(5'-phosphoribosyl)-ATP (PR-ATP). Has a crucial role in the pathway because the rate of histidine biosynthesis seems to be controlled primarily by regulation of HisG enzymatic activity. The chain is ATP phosphoribosyltransferase from Alcanivorax borkumensis (strain ATCC 700651 / DSM 11573 / NCIMB 13689 / SK2).